The primary structure comprises 354 residues: Glutamine synthetase (354 aa).

A GS beta-grasp domain is found at 22–101; the sequence is IQAEYVWVDG…VLAETYNSDG (80 aa). The 247-residue stretch at 108–354 folds into the GS catalytic domain; it reads FRHHAAKVME…IIVETTLLNA (247 aa).

Belongs to the glutamine synthetase family. In terms of assembly, homooctamer.

The protein localises to the cytoplasm. The catalysed reaction is L-glutamate + NH4(+) + ATP = L-glutamine + ADP + phosphate + H(+). The sequence is that of Glutamine synthetase (GLN1) from Hebeloma cylindrosporum.